A 217-amino-acid chain; its full sequence is Adr-2-binding protein 1 (217 aa).

The disordered stretch occupies residues 33–65; that stretch reads ARPEPQHDSLKRRNTTSSIAKKKAKMTRGDEQI. A compositionally biased stretch (basic residues) spans 44–58; that stretch reads RRNTTSSIAKKKAKM.

Interacts with double-stranded RNA-specific adenosine deaminase adr-2. In terms of tissue distribution, expressed in main body hypodermal cells, the hypodermal seam cells, pharynx, intestine and some neurons.

The protein localises to the nucleus. Required for the A-I editing activity of the double-stranded RNA-specific adenosine deaminase adr-2 by facilitating adr-2 nuclear localization. This Caenorhabditis elegans protein is Adr-2-binding protein 1.